The sequence spans 198 residues: Probable chorismate pyruvate-lyase (198 aa).

The substrate site is built by arginine 76, leucine 114, and glutamate 172.

Belongs to the UbiC family.

The protein localises to the cytoplasm. The enzyme catalyses chorismate = 4-hydroxybenzoate + pyruvate. Its pathway is cofactor biosynthesis; ubiquinone biosynthesis. In terms of biological role, removes the pyruvyl group from chorismate, with concomitant aromatization of the ring, to provide 4-hydroxybenzoate (4HB) for the ubiquinone pathway. The chain is Probable chorismate pyruvate-lyase from Bordetella avium (strain 197N).